Consider the following 164-residue polypeptide: UPF0304 protein KPK_1463 (164 aa).

It belongs to the UPF0304 family.

This is UPF0304 protein KPK_1463 from Klebsiella pneumoniae (strain 342).